The chain runs to 315 residues: DNA-directed RNA polymerase subunit alpha (315 aa).

The tract at residues 1-228 (MIEIEKPKIE…EHLNLFIDLS (228 aa)) is alpha N-terminal domain (alpha-NTD). Positions 245–315 (KEKVLEMTIE…LGLSLAPSED (71 aa)) are alpha C-terminal domain (alpha-CTD).

This sequence belongs to the RNA polymerase alpha chain family. As to quaternary structure, homodimer. The RNAP catalytic core consists of 2 alpha, 1 beta, 1 beta' and 1 omega subunit. When a sigma factor is associated with the core the holoenzyme is formed, which can initiate transcription.

The catalysed reaction is RNA(n) + a ribonucleoside 5'-triphosphate = RNA(n+1) + diphosphate. DNA-dependent RNA polymerase catalyzes the transcription of DNA into RNA using the four ribonucleoside triphosphates as substrates. In Acetivibrio thermocellus (strain ATCC 27405 / DSM 1237 / JCM 9322 / NBRC 103400 / NCIMB 10682 / NRRL B-4536 / VPI 7372) (Clostridium thermocellum), this protein is DNA-directed RNA polymerase subunit alpha.